Here is a 268-residue protein sequence, read N- to C-terminus: MKRVVLLLAYQGTAYAGWQRQPNDLSIQEVIESALARVLGKPIVVSSSGRTDSGVHAYGQVAHFSQPDHPLFSQPQSIKKMLNAILPKDIVIRDVVLSDVNFHARFSAIAKEYRYSLTRSPKPLPWQRYFAYYPRHSIKIDLMQKGAKYLLGTHDFASFANHGRDYTSTERTLFKLDIIDNEEIVTIICKGNGFLYKMVRNIVGSLLDISKEKYPPEYIQEILAQKSRRKGPPAAPSHALSLHHVCYPKPYNWFCTPECDINSLKEEK.

The active-site Nucleophile is the D52. Y113 lines the substrate pocket.

It belongs to the tRNA pseudouridine synthase TruA family. In terms of assembly, homodimer.

It catalyses the reaction uridine(38/39/40) in tRNA = pseudouridine(38/39/40) in tRNA. Formation of pseudouridine at positions 38, 39 and 40 in the anticodon stem and loop of transfer RNAs. The polypeptide is tRNA pseudouridine synthase A (Chlamydia felis (strain Fe/C-56) (Chlamydophila felis)).